Here is a 360-residue protein sequence, read N- to C-terminus: MSELETLERTLLADIDAAADEGAIEALRVGALGKKGSISELLKTLGTMSPEERQTRGARINALKNIVTEAISARKLALKDAAIAERLARETVDISLPVRSSPAERGRIHPISQIVDEITAIFGDMGFSIAEGPDIETDYYNFTALNFPEGHPAREMHDTFFFQPDENGERKVLRTHTSPVQIRTMEAEKPPIRIIIPGKTYRQDSDATHSPMFHQVEGLVIDKTANVANMRWVLEEFCKAFFEVDQVTMRFRPSFFPFTEPSFEVDIQCDRSGPIVKFGEGKDWMEILGCGMVHPNVLRAGGLDPDEYQGFAWGMGLDRIAMLKYGMPDLRDFFNADVRWMTHYGFRPLDMPTLFGGLSA.

Glutamate 260 serves as a coordination point for Mg(2+).

This sequence belongs to the class-II aminoacyl-tRNA synthetase family. Phe-tRNA synthetase alpha subunit type 1 subfamily. In terms of assembly, tetramer of two alpha and two beta subunits. The cofactor is Mg(2+).

The protein resides in the cytoplasm. It catalyses the reaction tRNA(Phe) + L-phenylalanine + ATP = L-phenylalanyl-tRNA(Phe) + AMP + diphosphate + H(+). The sequence is that of Phenylalanine--tRNA ligase alpha subunit from Sinorhizobium fredii (strain NBRC 101917 / NGR234).